Consider the following 104-residue polypeptide: Pyrimidine/purine nucleoside phosphorylase (104 aa).

Belongs to the nucleoside phosphorylase PpnP family.

It catalyses the reaction a purine D-ribonucleoside + phosphate = a purine nucleobase + alpha-D-ribose 1-phosphate. The catalysed reaction is adenosine + phosphate = alpha-D-ribose 1-phosphate + adenine. The enzyme catalyses cytidine + phosphate = cytosine + alpha-D-ribose 1-phosphate. It carries out the reaction guanosine + phosphate = alpha-D-ribose 1-phosphate + guanine. It catalyses the reaction inosine + phosphate = alpha-D-ribose 1-phosphate + hypoxanthine. The catalysed reaction is thymidine + phosphate = 2-deoxy-alpha-D-ribose 1-phosphate + thymine. The enzyme catalyses uridine + phosphate = alpha-D-ribose 1-phosphate + uracil. It carries out the reaction xanthosine + phosphate = alpha-D-ribose 1-phosphate + xanthine. Functionally, catalyzes the phosphorolysis of diverse nucleosides, yielding D-ribose 1-phosphate and the respective free bases. Can use uridine, adenosine, guanosine, cytidine, thymidine, inosine and xanthosine as substrates. Also catalyzes the reverse reactions. The protein is Pyrimidine/purine nucleoside phosphorylase of Geobacter metallireducens (strain ATCC 53774 / DSM 7210 / GS-15).